The following is a 114-amino-acid chain: Protein gamma (114 aa).

The protein is Protein gamma (gamma) of Bovine ephemeral fever virus (strain BB7721) (BEFV).